A 152-amino-acid polypeptide reads, in one-letter code: Nucleoside diphosphate kinase (152 aa).

Positions 11, 59, 87, 93, 104, and 114 each coordinate ATP. Histidine 117 (pros-phosphohistidine intermediate) is an active-site residue.

It belongs to the NDK family. In terms of assembly, homotetramer. Mg(2+) is required as a cofactor.

The protein localises to the cytoplasm. It catalyses the reaction a 2'-deoxyribonucleoside 5'-diphosphate + ATP = a 2'-deoxyribonucleoside 5'-triphosphate + ADP. The catalysed reaction is a ribonucleoside 5'-diphosphate + ATP = a ribonucleoside 5'-triphosphate + ADP. In terms of biological role, major role in the synthesis of nucleoside triphosphates other than ATP. The ATP gamma phosphate is transferred to the NDP beta phosphate via a ping-pong mechanism, using a phosphorylated active-site intermediate. The protein is Nucleoside diphosphate kinase of Prochlorococcus marinus (strain MIT 9515).